A 904-amino-acid chain; its full sequence is Serine/arginine repetitive matrix protein 1 (904 aa).

M1 carries the post-translational modification N-acetylmethionine. Positions 1-151 (MDAGFFRGTS…ASMKKQDEDK (151 aa)) are necessary for DNA and RNA-binding. Residues 1-156 (MDAGFFRGTS…QDEDKDKRDK (156 aa)) are necessary for mRNA 3'-end cleavage and cytoplasmic accumulation. R7 is subject to Citrulline. In terms of domain architecture, PWI spans 27–126 (QLKFAECLEK…AGIPSAFLEL (100 aa)). K127 participates in a covalent cross-link: Glycyl lysine isopeptide (Lys-Gly) (interchain with G-Cter in SUMO2). The span at 139 to 170 (EKLASMKKQDEDKDKRDKEEKESSREKRERSR) shows a compositional bias: basic and acidic residues. A disordered region spans residues 139–904 (EKLASMKKQD…MRKAQVSPQS (766 aa)). An N6-acetyllysine modification is found at K140. Residues 171-207 (SPRRRKSRSPSPRRRSSPVRRERKRSHSRSPRHRTKS) are compositionally biased toward basic residues. Basic and acidic residues predominate over residues 214–234 (PEKKEKTPELPEPSVKVKEPS). A Phosphothreonine modification is found at T220. Phosphoserine is present on S227. K231 participates in a covalent cross-link: Glycyl lysine isopeptide (Lys-Gly) (interchain with G-Cter in SUMO1); alternate. A Glycyl lysine isopeptide (Lys-Gly) (interchain with G-Cter in SUMO2); alternate cross-link involves residue K231. A phosphoserine mark is found at S234 and S240. T241 is modified (phosphothreonine). A compositionally biased stretch (basic and acidic residues) spans 246-275 (KVPKPEPIPEPKEPSPEKNSKKEKEKEKTR). K249 is covalently cross-linked (Glycyl lysine isopeptide (Lys-Gly) (interchain with G-Cter in SUMO2)). S260 carries the post-translational modification Phosphoserine. Basic residues-rich tracts occupy residues 276-329 (PRSR…RTPP) and 336-351 (PRHR…RRRS). The tract at residues 300-688 (RRHRSRSRSY…NKRHSPSPRP (389 aa)) is necessary for speckles and matrix localization. The segment covering 352–368 (SASLSGSSSSSSSSRSR) has biased composition (low complexity). 4 positions are modified to phosphoserine: S389, S391, S393, and S402. T406 carries the post-translational modification Phosphothreonine. Residue S414 is modified to Phosphoserine. T416 bears the Phosphothreonine mark. A phosphoserine mark is found at S420, S429, S431, and S436. Positions 428–438 (VSVSPGRTSGK) are enriched in polar residues. K447 is covalently cross-linked (Glycyl lysine isopeptide (Lys-Gly) (interchain with G-Cter in SUMO2)). Residues S450 and S452 each carry the phosphoserine modification. K459 participates in a covalent cross-link: Glycyl lysine isopeptide (Lys-Gly) (interchain with G-Cter in SUMO2). Residues S463 and S465 each carry the phosphoserine modification. K472 is covalently cross-linked (Glycyl lysine isopeptide (Lys-Gly) (interchain with G-Cter in SUMO2)). S478 is modified (phosphoserine). A compositionally biased stretch (low complexity) spans 478–501 (SVQQRRQYRRQNQQSSSDSGSSSS). The segment covering 503-518 (EDERPKRSHVKNGEVG) has biased composition (basic and acidic residues). Phosphoserine occurs at positions 524, 526, 528, 530, 532, 549, and 551. Positions 533 to 560 (PRKRQKETSPRGRRRRSPSPPPTRRRRS) are enriched in basic residues. At T555 the chain carries Phosphothreonine. Residues S560 and S562 each carry the phosphoserine modification. The span at 567 to 592 (PRRRRTPTPPPRRRTPSPPPRRRSPS) shows a compositional bias: basic residues. Phosphothreonine occurs at positions 572, 574, and 581. S583 carries the phosphoserine modification. Positions 593–605 (PRRYSPPIQRRYS) are enriched in low complexity. Phosphotyrosine is present on Y596. Phosphoserine is present on residues S597, S605, and S607. The residue at position 614 (T614) is a Phosphothreonine. 5 positions are modified to phosphoserine: S616, S626, S628, S636, and S638. A compositionally biased stretch (basic residues) spans 621–636 (PKRRASPSPPPKRRVS). The segment covering 649–663 (TKRRSPSLSSKHRKG) has biased composition (basic residues). 7 positions are modified to phosphoserine: S694, S695, S696, S705, S707, S713, and S715. Composition is skewed to low complexity over residues 701–719 (RRGA…PSTR) and 736–759 (AASP…SPEP). At T718 the chain carries Phosphothreonine. 10 positions are modified to phosphoserine: S738, S740, S748, S752, S754, S756, S769, S773, S775, and S777. The segment covering 771–786 (VQSQSPSTNWSPAVPV) has biased composition (low complexity). T778 is modified (phosphothreonine). 2 positions are modified to phosphoserine: S781 and S791. T793 bears the Phosphothreonine mark. Phosphoserine is present on residues S795, S797, and S802. Residues 809 to 834 (KKKKKKKDKKHKKDKKHKKHKKHKKE) show a composition bias toward basic residues. The span at 837–866 (VAAAAAAAVTPAAIAAATTTLAQEEPVAAP) shows a compositional bias: low complexity. Residue K869 forms a Glycyl lysine isopeptide (Lys-Gly) (interchain with G-Cter in SUMO2) linkage. T872 carries the post-translational modification Phosphothreonine. S874 carries the post-translational modification Phosphoserine. The span at 882–892 (DLEKHLREKAL) shows a compositional bias: basic and acidic residues. Position 901 is a phosphoserine (S901).

The protein belongs to the splicing factor SR family. In terms of assembly, identified in the spliceosome C complex. Found in a pre-mRNA splicing complex with SFRS4, SFRS5, SNRP70, SNRPA1, SRRM1 and SRRM2. Found in a pre-mRNA exonic splicing enhancer (ESE) complex with SNRP70, SNRPA1, SRRM1 and TRA2B/SFRS10. Component of the minor spliceosome, which splices U12-type introns. Found in a mRNA splicing-dependent exon junction complex (EJC) with DEK, PRPF8, NCBP1, RBM8A, RNPS1, SRRM1 and ALYREF/THOC4. Interacts with DDX39B, CPSF1, RBM8A, RNPS1, and ALYREF/THOC4. Seems to be a compound of RNA export complexes that are released from speckles in a ATP-dependent manner. Phosphorylated on multiple serine and threonine residues by DYRK3 during the G2-to-M transition, after the nuclear-envelope breakdown. Phosphorylation by DYRK3 promotes disassembly of nuclear speckles. In terms of processing, citrullinated by PADI4.

The protein localises to the nucleus matrix. The protein resides in the nucleus speckle. Its function is as follows. Part of pre- and post-splicing multiprotein mRNP complexes. As a component of the minor spliceosome, involved in the splicing of U12-type introns in pre-mRNAs. Involved in numerous pre-mRNA processing events. Promotes constitutive and exonic splicing enhancer (ESE)-dependent splicing activation by bridging together sequence-specific (SR family proteins, SFRS4, SFRS5 and TRA2B/SFRS10) and basal snRNP (SNRP70 and SNRPA1) factors of the spliceosome. Stimulates mRNA 3'-end cleavage independently of the formation of an exon junction complex. Binds both pre-mRNA and spliced mRNA 20-25 nt upstream of exon-exon junctions. Binds RNA and DNA with low sequence specificity and has similar preference for either double- or single-stranded nucleic acid substrates. This is Serine/arginine repetitive matrix protein 1 (SRRM1) from Homo sapiens (Human).